The chain runs to 583 residues: Isocitrate dehydrogenase kinase/phosphatase (583 aa).

ATP is bound by residues 315–321 and lysine 336; that span reads APGIRGM. Aspartate 371 is an active-site residue.

The protein belongs to the AceK family.

The protein localises to the cytoplasm. It carries out the reaction L-seryl-[isocitrate dehydrogenase] + ATP = O-phospho-L-seryl-[isocitrate dehydrogenase] + ADP + H(+). Bifunctional enzyme which can phosphorylate or dephosphorylate isocitrate dehydrogenase (IDH) on a specific serine residue. This is a regulatory mechanism which enables bacteria to bypass the Krebs cycle via the glyoxylate shunt in response to the source of carbon. When bacteria are grown on glucose, IDH is fully active and unphosphorylated, but when grown on acetate or ethanol, the activity of IDH declines drastically concomitant with its phosphorylation. This Salmonella paratyphi B (strain ATCC BAA-1250 / SPB7) protein is Isocitrate dehydrogenase kinase/phosphatase.